An 896-amino-acid polypeptide reads, in one-letter code: FHIP family protein C05D11.8 (896 aa).

The disordered stretch occupies residues 823-865 (STASSPRTSDDHDPTLFYGRSTMAPPGRKPLLREPSRQETLDD). Basic and acidic residues predominate over residues 853-865 (LLREPSRQETLDD).

This sequence belongs to the FHIP family.

The chain is FHIP family protein C05D11.8 from Caenorhabditis elegans.